The chain runs to 553 residues: Serine/threonine-protein kinase WNG2 (553 aa).

Disordered stretches follow at residues 1–20 and 88–107; these read MMFP…RLQR and NREP…GGAE. Residues 1–64 form the signal peptide; sequence MMFPAVAAPP…GLSWVSVAVA (64 aa). In terms of domain architecture, Protein kinase spans 125–395; that stretch reads FKQLRPVDEF…IGEVMEDPFF (271 aa). K186 is a binding site for ATP. The active-site Proton acceptor is the D278. The interval 432-553 is disordered; sequence REKADAAAKA…GFNKEDAQES (122 aa). The span at 438 to 451 shows a compositional bias: low complexity; sequence AAKAADNAEVPAAK. Composition is skewed to basic and acidic residues over residues 465 to 486, 494 to 524, and 531 to 553; these read GDRD…EKGR, EGNH…ENRE, and QREE…AQES.

Belongs to the protein kinase superfamily. STE Ser/Thr protein kinase family. WNG subfamily. It depends on Mg(2+) as a cofactor.

Its subcellular location is the cytoplasmic granule. It localises to the secreted. The protein localises to the parasitophorous vacuole lumen. It catalyses the reaction L-seryl-[protein] + ATP = O-phospho-L-seryl-[protein] + ADP + H(+). The enzyme catalyses L-threonyl-[protein] + ATP = O-phospho-L-threonyl-[protein] + ADP + H(+). In terms of biological role, probable serine/threonine-protein kinase. The sequence is that of Serine/threonine-protein kinase WNG2 from Toxoplasma gondii.